The chain runs to 121 residues: uncharacterized protein (121 aa).

Positions 12-24 are enriched in low complexity; that stretch reads EEGGASAAAPDAS. 2 disordered regions span residues 12–63 and 101–121; these read EEGG…RLEP and KKLA…SPVV. Positions 26 to 35 are enriched in basic residues; sequence KSKKGARPCF. The segment covering 40-49 has biased composition (polar residues); the sequence is QAGSCMTGRQ. Residues 112-121 are compositionally biased toward basic and acidic residues; sequence GSQKERSPVV.

This is an uncharacterized protein from Homo sapiens (Human).